Reading from the N-terminus, the 147-residue chain is Large ribosomal subunit protein uL15 (147 aa).

Residues 1-42 (MTIKLHHLRPAPGAKTDKTRVGRGEGSKGKTAGRGTKGTKAR) are disordered. Residues 15–28 (KTDKTRVGRGEGSK) show a composition bias toward basic and acidic residues.

This sequence belongs to the universal ribosomal protein uL15 family. Part of the 50S ribosomal subunit.

Functionally, binds to the 23S rRNA. This Nocardia farcinica (strain IFM 10152) protein is Large ribosomal subunit protein uL15.